A 353-amino-acid polypeptide reads, in one-letter code: Serine/threonine-protein phosphatase 2A activator 1 (353 aa).

The disordered stretch occupies residues 331–353; it reads ANNATTKMPPPLSTSTSRFIHRR. Over residues 343–353 the composition is skewed to polar residues; sequence STSTSRFIHRR.

This sequence belongs to the PTPA-type PPIase family.

The protein resides in the cytoplasm. The protein localises to the nucleus. It carries out the reaction [protein]-peptidylproline (omega=180) = [protein]-peptidylproline (omega=0). PPIases accelerate the folding of proteins. It catalyzes the cis-trans isomerization of proline imidic peptide bonds in oligopeptides. Acts as a regulatory subunit for PP2A-like phosphatases modulating their activity or substrate specificity, probably by inducing a conformational change in the catalytic subunit, a direct target of the PPIase. Can reactivate inactive phosphatase PP2A-phosphatase methylesterase complexes (PP2Ai) in presence of ATP and Mg(2+) by dissociating the inactive form from the complex. This is Serine/threonine-protein phosphatase 2A activator 1 (RRD1) from Kluyveromyces lactis (strain ATCC 8585 / CBS 2359 / DSM 70799 / NBRC 1267 / NRRL Y-1140 / WM37) (Yeast).